The primary structure comprises 161 residues: SsrA-binding protein (161 aa).

The tract at residues 138–161 (DKRTDSKEKDWNRDKARIMKSSLR) is disordered. Basic and acidic residues predominate over residues 139-154 (KRTDSKEKDWNRDKAR).

It belongs to the SmpB family.

It localises to the cytoplasm. Required for rescue of stalled ribosomes mediated by trans-translation. Binds to transfer-messenger RNA (tmRNA), required for stable association of tmRNA with ribosomes. tmRNA and SmpB together mimic tRNA shape, replacing the anticodon stem-loop with SmpB. tmRNA is encoded by the ssrA gene; the 2 termini fold to resemble tRNA(Ala) and it encodes a 'tag peptide', a short internal open reading frame. During trans-translation Ala-aminoacylated tmRNA acts like a tRNA, entering the A-site of stalled ribosomes, displacing the stalled mRNA. The ribosome then switches to translate the ORF on the tmRNA; the nascent peptide is terminated with the 'tag peptide' encoded by the tmRNA and targeted for degradation. The ribosome is freed to recommence translation, which seems to be the essential function of trans-translation. The polypeptide is SsrA-binding protein (Aliivibrio fischeri (strain MJ11) (Vibrio fischeri)).